The following is a 231-amino-acid chain: Ribonuclease 3 (231 aa).

Residues 5 to 134 (QEKLKNDYGL…FLGALFIDQG (130 aa)) form the RNase III domain. Glu-47 lines the Mg(2+) pocket. Asp-51 is an active-site residue. Mg(2+) contacts are provided by Asn-120 and Glu-123. Glu-123 is an active-site residue. The DRBM domain occupies 160–229 (DYKTELQEVL…AENAIKGQNH (70 aa)).

Belongs to the ribonuclease III family. In terms of assembly, homodimer. Requires Mg(2+) as cofactor.

Its subcellular location is the cytoplasm. It carries out the reaction Endonucleolytic cleavage to 5'-phosphomonoester.. Its function is as follows. Digests double-stranded RNA. Involved in the processing of primary rRNA transcript to yield the immediate precursors to the large and small rRNAs (23S and 16S). Processes some mRNAs, and tRNAs when they are encoded in the rRNA operon. Processes pre-crRNA and tracrRNA of type II CRISPR loci if present in the organism. This Lactococcus lactis subsp. cremoris (strain SK11) protein is Ribonuclease 3.